The primary structure comprises 144 residues: Large ribosomal subunit protein uL16 (144 aa).

Over residues methionine 1–alanine 17 the composition is skewed to basic residues. The disordered stretch occupies residues methionine 1 to glutamine 22.

This sequence belongs to the universal ribosomal protein uL16 family. Part of the 50S ribosomal subunit.

Binds 23S rRNA and is also seen to make contacts with the A and possibly P site tRNAs. This is Large ribosomal subunit protein uL16 from Bacteroides fragilis (strain ATCC 25285 / DSM 2151 / CCUG 4856 / JCM 11019 / LMG 10263 / NCTC 9343 / Onslow / VPI 2553 / EN-2).